The sequence spans 171 residues: Inosine/xanthosine triphosphatase (171 aa).

Thr-8–Lys-13 contacts substrate. Mg(2+) contacts are provided by Glu-38 and Gln-68.

Belongs to the YjjX NTPase family. In terms of assembly, homodimer. It depends on Mg(2+) as a cofactor. Mn(2+) is required as a cofactor.

The catalysed reaction is XTP + H2O = XDP + phosphate + H(+). It carries out the reaction ITP + H2O = IDP + phosphate + H(+). Phosphatase that hydrolyzes non-canonical purine nucleotides such as XTP and ITP to their respective diphosphate derivatives. Probably excludes non-canonical purines from DNA/RNA precursor pool, thus preventing their incorporation into DNA/RNA and avoiding chromosomal lesions. In Citrobacter koseri (strain ATCC BAA-895 / CDC 4225-83 / SGSC4696), this protein is Inosine/xanthosine triphosphatase.